The sequence spans 288 residues: Energy-coupling factor transporter ATP-binding protein EcfA2 (288 aa).

In terms of domain architecture, ABC transporter spans 3-246; it reads IKLEQLGYCY…PDELVDLGLS (244 aa). 40 to 47 lines the ATP pocket; it reads GHTGSGKS.

It belongs to the ABC transporter superfamily. Energy-coupling factor EcfA family. In terms of assembly, forms a stable energy-coupling factor (ECF) transporter complex composed of 2 membrane-embedded substrate-binding proteins (S component), 2 ATP-binding proteins (A component) and 2 transmembrane proteins (T component).

Its subcellular location is the cell membrane. In terms of biological role, ATP-binding (A) component of a common energy-coupling factor (ECF) ABC-transporter complex. Unlike classic ABC transporters this ECF transporter provides the energy necessary to transport a number of different substrates. The sequence is that of Energy-coupling factor transporter ATP-binding protein EcfA2 from Listeria innocua serovar 6a (strain ATCC BAA-680 / CLIP 11262).